An 89-amino-acid chain; its full sequence is Elongation factor 1-beta (89 aa).

Belongs to the EF-1-beta/EF-1-delta family.

Its function is as follows. Promotes the exchange of GDP for GTP in EF-1-alpha/GDP, thus allowing the regeneration of EF-1-alpha/GTP that could then be used to form the ternary complex EF-1-alpha/GTP/AAtRNA. The sequence is that of Elongation factor 1-beta from Methanococcoides burtonii (strain DSM 6242 / NBRC 107633 / OCM 468 / ACE-M).